We begin with the raw amino-acid sequence, 1058 residues long: Carbamoyl phosphate synthase large chain (1058 aa).

A carboxyphosphate synthetic domain region spans residues Met1–Glu401. Residues Arg129, Arg169, Gly175, Gly176, Arg208, Ile210, Glu215, Gly241, Ile242, His243, Gln284, and Glu298 each contribute to the ATP site. The ATP-grasp 1 domain occupies Lys133–Val327. Positions 284, 298, and 300 each coordinate Mg(2+). Positions 284, 298, and 300 each coordinate Mn(2+). An oligomerization domain region spans residues Ile402–Ser546. The segment at Val547–Asn929 is carbamoyl phosphate synthetic domain. Residues Glu671–Leu861 form the ATP-grasp 2 domain. 10 residues coordinate ATP: Arg707, Ser746, Ile748, Glu752, Gly777, Val778, His779, Ser780, Gln820, and Glu832. Positions 820, 832, and 834 each coordinate Mg(2+). 3 residues coordinate Mn(2+): Gln820, Glu832, and Asn834. Positions Ser930–Ile1058 constitute an MGS-like domain. The tract at residues Ser930–Ile1058 is allosteric domain.

The protein belongs to the CarB family. Composed of two chains; the small (or glutamine) chain promotes the hydrolysis of glutamine to ammonia, which is used by the large (or ammonia) chain to synthesize carbamoyl phosphate. Tetramer of heterodimers (alpha,beta)4. Mg(2+) is required as a cofactor. Requires Mn(2+) as cofactor.

It catalyses the reaction hydrogencarbonate + L-glutamine + 2 ATP + H2O = carbamoyl phosphate + L-glutamate + 2 ADP + phosphate + 2 H(+). It carries out the reaction hydrogencarbonate + NH4(+) + 2 ATP = carbamoyl phosphate + 2 ADP + phosphate + 2 H(+). It participates in amino-acid biosynthesis; L-arginine biosynthesis; carbamoyl phosphate from bicarbonate: step 1/1. The protein operates within pyrimidine metabolism; UMP biosynthesis via de novo pathway; (S)-dihydroorotate from bicarbonate: step 1/3. In terms of biological role, large subunit of the glutamine-dependent carbamoyl phosphate synthetase (CPSase). CPSase catalyzes the formation of carbamoyl phosphate from the ammonia moiety of glutamine, carbonate, and phosphate donated by ATP, constituting the first step of 2 biosynthetic pathways, one leading to arginine and/or urea and the other to pyrimidine nucleotides. The large subunit (synthetase) binds the substrates ammonia (free or transferred from glutamine from the small subunit), hydrogencarbonate and ATP and carries out an ATP-coupled ligase reaction, activating hydrogencarbonate by forming carboxy phosphate which reacts with ammonia to form carbamoyl phosphate. The sequence is that of Carbamoyl phosphate synthase large chain from Streptococcus pyogenes serotype M18 (strain MGAS8232).